Here is a 296-residue protein sequence, read N- to C-terminus: uncharacterized protein (296 aa).

The chain crosses the membrane as a helical span at residues 1 to 21; the sequence is MIFAVVDILEISIQLLCILLF.

The protein localises to the membrane. This is an uncharacterized protein from Caenorhabditis elegans.